The sequence spans 261 residues: Thiazole synthase (261 aa).

Residue lysine 101 is the Schiff-base intermediate with DXP of the active site. 1-deoxy-D-xylulose 5-phosphate is bound by residues glycine 162, 188–189 (AG), and 210–211 (NT).

This sequence belongs to the ThiG family. As to quaternary structure, homotetramer. Forms heterodimers with either ThiH or ThiS.

The protein resides in the cytoplasm. It carries out the reaction [ThiS sulfur-carrier protein]-C-terminal-Gly-aminoethanethioate + 2-iminoacetate + 1-deoxy-D-xylulose 5-phosphate = [ThiS sulfur-carrier protein]-C-terminal Gly-Gly + 2-[(2R,5Z)-2-carboxy-4-methylthiazol-5(2H)-ylidene]ethyl phosphate + 2 H2O + H(+). The protein operates within cofactor biosynthesis; thiamine diphosphate biosynthesis. Catalyzes the rearrangement of 1-deoxy-D-xylulose 5-phosphate (DXP) to produce the thiazole phosphate moiety of thiamine. Sulfur is provided by the thiocarboxylate moiety of the carrier protein ThiS. In vitro, sulfur can be provided by H(2)S. The sequence is that of Thiazole synthase from Aromatoleum aromaticum (strain DSM 19018 / LMG 30748 / EbN1) (Azoarcus sp. (strain EbN1)).